The chain runs to 116 residues: Large ribosomal subunit protein bL19 (116 aa).

It belongs to the bacterial ribosomal protein bL19 family.

In terms of biological role, this protein is located at the 30S-50S ribosomal subunit interface and may play a role in the structure and function of the aminoacyl-tRNA binding site. In Mycoplasma mobile (strain ATCC 43663 / 163K / NCTC 11711) (Mesomycoplasma mobile), this protein is Large ribosomal subunit protein bL19.